The chain runs to 286 residues: MTELSESTTSKFVTINEKGLSNFRIHLNDAGQGEAVIMLHGGGPGAGGWSNYYRNIGPFVAAGYRVILPDAPGFNKSDAVVMDEQRGLVNARAVKGMMDALGIDKAHLVGNSMGGAGALNFALEYPERTGKVILMGPGGLGASLFNPMPMEGIKLLFKLYAEPSLETLKQMLNVFMFDQSLITDELLQGRWANIQRNPEHLKNFILSAQKVPLSAWDVSPRLGEIKAKTLVTWGRDDRFVPLDHGLKLVANMPDAQLHVFPRCGHWAQWEHADAFNRLTLDFLANG.

Residues 36–271 (VIMLHGGGPG…RCGHWAQWEH (236 aa)) form the AB hydrolase-1 domain. Substrate is bound by residues 42–43 (GG), N51, N111, S180, and R190. Catalysis depends on H265, which acts as the Proton acceptor. A substrate-binding site is contributed by W266.

It belongs to the AB hydrolase superfamily. BphD family. In terms of assembly, homodimer.

The enzyme catalyses 2,6-dioxo-6-phenylhexa-3-enoate + H2O = 2-oxopent-4-enoate + benzoate + H(+). The protein operates within xenobiotic degradation; biphenyl degradation; 2-hydroxy-2,4-pentadienoate and benzoate from biphenyl: step 4/4. Its function is as follows. Catalyzes an unusual C-C bond hydrolysis of 2-hydroxy-6-oxo-6-phenylhexa-2,4-dienoic acid (HOPDA) to produce benzoic acid and 2-hydroxy-2,4-pentadienoic acid (HPD). The chain is 2-hydroxy-6-oxo-6-phenylhexa-2,4-dienoate hydrolase from Burkholderia cepacia (Pseudomonas cepacia).